A 265-amino-acid polypeptide reads, in one-letter code: Palmitoyltransferase ZDHHC21 (265 aa).

Residues 1–16 (MGLRIHFVVDPHGWCC) are Cytoplasmic-facing. A helical transmembrane segment spans residues 17 to 37 (MGLIVFVWLYNIVIIPKIVLF). At 38–44 (PHYEEGH) the chain is on the extracellular side. Residues 45 to 65 (IPGILIIIFYGISIFCLVALV) traverse the membrane as a helical segment. The Cytoplasmic segment spans residues 66-133 (RASLTDPGRL…NNCVGEDNHW (68 aa)). Residues 90–140 (ELCNKCNLMRPKRSHHCSRCGHCVRRMDHHCPWINNCVGEDNHWLFLQLCF) form the DHHC domain. Cys-120 serves as the catalytic S-palmitoyl cysteine intermediate. Residues 134 to 154 (LFLQLCFYTELLTCYALMFSF) traverse the membrane as a helical segment. Residues 155 to 185 (CHYYYFLPLKKRNLDLFVVRHELAIMRLAAF) lie on the Extracellular side of the membrane. A helical membrane pass occupies residues 186-206 (MGITMLVGITGLFYTQLIGII). Residues 207-265 (TDTTSIEKMSNCCEEISRPRKPWQQTFSEVFGTRWKILWFIPFRQRQPLRVPYHFANHV) are Cytoplasmic-facing.

This sequence belongs to the DHHC palmitoyltransferase family. In terms of tissue distribution, widely expressed. Expressed in Henle's layer within the hair bulb and the hair shaft cuticle (at protein level). Expression is limited to the post-mitotic lineages of inner root sheath (IRS) and cuticle.

It is found in the golgi apparatus membrane. Its subcellular location is the golgi apparatus. The protein resides in the cis-Golgi network membrane. It localises to the cell membrane. It catalyses the reaction L-cysteinyl-[protein] + hexadecanoyl-CoA = S-hexadecanoyl-L-cysteinyl-[protein] + CoA. In terms of biological role, palmitoyltransferase that catalyzes the addition of palmitate onto various protein substrates. Palmitoylates sex steroid hormone receptors, including ESR1, PGR and AR, thereby regulating their targeting to the plasma membrane. This affects rapid intracellular signaling by sex hormones via ERK and AKT kinases and the generation of cAMP, but does not affect that mediated by their nuclear receptor. Palmitoylates FYN, regulates its localization in hair follicles and plays a key role in epidermal homeostasis and hair follicle differentiation. Through the palmitoylation of PLCB1 and the regulation of PLCB1 downstream signaling may indirectly regulate the function of the endothelial barrier and the adhesion of leukocytes to the endothelium. Also has a palmitoyltransferase activity toward ADRA1D, positively regulating its activity and expression and may thereby play a role in vascular contraction. May also palmitoylate eNOS and LCK. The polypeptide is Palmitoyltransferase ZDHHC21 (Mus musculus (Mouse)).